A 963-amino-acid polypeptide reads, in one-letter code: MDSPSAGYTFEYLIETLNGSSQKKFFNVPKLGGTKYDILPYSIRVLLEAAVRNCDGFLMKKEDVINILDWKTKQSNVEVPFFPARVVLQDFTGIPAMVDFAAMREAVKTLGGDPKKVHPACPTDLTVDHSLQIDFSKCAIQNAPNPGGGDLQKAGKLSPLKVQPKKLPCRGQTTCRGSCDSGELSRNSGTFSSQIENTPVLCPFHLQPVPEPETVLKNQEVEFGRNRERLQFFKWSSGAFKNVAVIPPGTGMAHQVNLEHLSRVVFEEADLLFPDSVIGTDSHITMVNGLGILGWGVGGIETEAVMLGLPVTLTLPEVVGCELTGSSNAFVTSIDIVLGITKHLRQVGVAGKFVEFFGSGVSQLSIVDRTTIANMCPEYGAILSFFPVDNVTLRHLEHTGFDKTKLESMEEYLKAVKLFRNDENSSEPEYSQVIQINLNSIVASVSGPKRPQDRVAVTDMKSDFQACLNEKVGFKGFQVAAEKQSDTVSVRYDGSEYKLSHGSVVIAAVISCTNNCNPSVMLAAGLLAKKAVETGLRVKPYIRTSLSPGSGMVTHYLSSSGVLPYLSKLGFEIVGYGCSTCVGNTAPLSEAILNAVKQGDLVTCGVLSGNKNFEGRLCDCVRANYLASPPLVVAYAIAGTVNIDFQTEPLGTDSTGKNIYLHDIWPSREEVHQIEEEHVILSMFKALKEKVEMGNKRWNSLDAPDSVLFPWDVKSTYIRCPSFFDKLTKEPAASQPIENAHVLLYLGDSVTTDHISPAGSIARSSAAAKYLTNRGLTPREFNSYGARRGNDAVMTRGTFANIKLFNKFIGKPAPKTIHFPSGQTLDVFEAAELYQKEGIPLIILAGKKYGSGNSRDWAAKGPYLLGVKAVLAESYEKIHKDHLIGIGIAPLEFLPGENADSLGLSGREVFSLSFPEELFPGITLNIKTSTGKEFSVIAAFENDVEITLYKHGGLLNFVARKFL.

Positions 512, 578, and 581 each coordinate [4Fe-4S] cluster.

It belongs to the aconitase/IPM isomerase family. Interacts with RBCK1 only in iron-rich conditions. Interacts (when associated with the 4Fe-4S) with FBXL5. Interacts with CIAO1 and CIAO2A. Requires [4Fe-4S] cluster as cofactor. Ubiquitinated and degraded by the proteasome in presence of high level of iron and oxygen. Ubiquitinated by a SCF complex containing FBXL5. Upon iron and oxygen depletion FBXL5 is degraded, preventing ubiquitination and allowing its RNA-binding activity. As to expression, ubiquitously expressed in rat tissues, the highest amounts present in skeletal muscle and heart.

It localises to the cytoplasm. Its function is as follows. RNA-binding protein that binds to iron-responsive elements (IRES), which are stem-loop structures found in the 5'-UTR of ferritin, and delta aminolevulinic acid synthase mRNAs, and in the 3'-UTR of transferrin receptor mRNA. Binding to the IRE element in ferritin results in the repression of its mRNA translation. Binding of the protein to the transferrin receptor mRNA inhibits the degradation of this otherwise rapidly degraded mRNA. The protein is Iron-responsive element-binding protein 2 (Ireb2) of Rattus norvegicus (Rat).